The chain runs to 473 residues: uncharacterized protein (473 aa).

The segment at 1-86 (MSSSPTESEI…NTSNYGSSRD (86 aa)) is disordered. The segment covering 10–19 (ILPKESHNSI) has biased composition (basic and acidic residues). 2 stretches are compositionally biased toward polar residues: residues 20–39 (DEQSQQPANTDTLVKDNSFN) and 55–68 (EPVQSQDPISPNMA). A Phosphoserine modification is found at Ser-64. Over residues 69–83 (SNESGNSENTSNYGS) the composition is skewed to low complexity. RRM domains are found at residues 95 to 165 (LWMG…NHLF), 188 to 260 (IFVG…PIRV), and 305 to 370 (VFVG…RIRL). Positions 448-473 (MHIPENGNSDTMPVPNTQGKHLSAEE) are disordered. Polar residues predominate over residues 453-467 (NGNSDTMPVPNTQGK).

This is an uncharacterized protein from Schizosaccharomyces pombe (strain 972 / ATCC 24843) (Fission yeast).